The sequence spans 486 residues: NADH-quinone oxidoreductase subunit N 1 (486 aa).

14 consecutive transmembrane segments (helical) span residues 15-35, 46-66, 72-92, 111-128, 131-151, 166-186, 208-228, 241-261, 276-296, 303-323, 331-351, 375-395, 410-432, and 455-475; these read FLPE…DPVI, ISLI…GIAG, MLMV…VGIL, YHAL…MAAS, LIMV…LAGY, FLLG…IYGL, FVGI…SAAP, PTPV…AIFL, QPLV…AAIL, MLAY…TAHS, MFYL…VSVL, AAMF…GGFF, IWLT…RILV, and FALI…GWVL.

The protein belongs to the complex I subunit 2 family. In terms of assembly, NDH-1 is composed of 14 different subunits. Subunits NuoA, H, J, K, L, M, N constitute the membrane sector of the complex.

Its subcellular location is the cell inner membrane. The enzyme catalyses a quinone + NADH + 5 H(+)(in) = a quinol + NAD(+) + 4 H(+)(out). Functionally, NDH-1 shuttles electrons from NADH, via FMN and iron-sulfur (Fe-S) centers, to quinones in the respiratory chain. The immediate electron acceptor for the enzyme in this species is believed to be ubiquinone. Couples the redox reaction to proton translocation (for every two electrons transferred, four hydrogen ions are translocated across the cytoplasmic membrane), and thus conserves the redox energy in a proton gradient. The chain is NADH-quinone oxidoreductase subunit N 1 from Solibacter usitatus (strain Ellin6076).